Reading from the N-terminus, the 599-residue chain is MFS-type transporter ucsM (599 aa).

Over residues 23–34 the composition is skewed to basic and acidic residues; the sequence is AHHHGKEREAHR. The tract at residues 23 to 42 is disordered; that stretch reads AHHHGKEREAHRQSLSSVPG. The next 8 helical transmembrane spans lie at 147-167, 178-198, 204-224, 263-283, 291-311, 386-406, 424-444, and 454-474; these read VALGLVFSFLSYVIPIFGAWL, ILIGVLIGGVAHIIMIAGAVP, GKGTAPFLVSLFLLALGAGLF, IMLIFYALINVGAFYSLATVY, WLAFLLPGIIYLLLPLMLWYL, IFLYFPIYHLNDGGVGTILPS, FNPITIMITVPVLTYIVYPAL, and ISRITLGFWLAVISGLVSSLV. N517 carries N-linked (GlcNAc...) asparagine glycosylation. 2 consecutive transmembrane segments (helical) span residues 539–559 and 563–583; these read LFLFSTALSSALGLILTPAIV and LVWVWAGPTIALAVQTVIFWV.

Belongs to the major facilitator superfamily. Proton-dependent oligopeptide transporter (POT/PTR) (TC 2.A.17) family.

The protein resides in the membrane. MFS-type transporter; part of the gene cluster that mediates the biosynthesis of UCS1025A, a member of the pyrrolizidinone family that acts as a strong telomerase inhibitor and displays potent antibacterial and antitumor properties. These compounds share a hemiaminal-containing pyrrolizidinone core fused with a gamma-lactone, giving a furopyrrolizidine that is connected to a decalin fragment. The sequence is that of MFS-type transporter ucsM from Acremonium sp.